The following is a 305-amino-acid chain: UPF0450 protein C17orf58 homolog (305 aa).

Residues 1–22 (MTARALWLLCLIVGWSPEAPVA) form the signal peptide. A disordered region spans residues 18 to 160 (EAPVAERKAP…DREPETQSCA (143 aa)). Residues 21–39 (VAERKAPPPHRKPDSRETP) show a composition bias toward basic and acidic residues. 3 cysteine pairs are disulfide-bonded: Cys-159–Cys-233, Cys-163–Cys-237, and Cys-174–Cys-304. In terms of domain architecture, NTR spans 159-304 (CARACSADAD…QVRGATHTQC (146 aa)).

It belongs to the UPF0450 family.

The polypeptide is UPF0450 protein C17orf58 homolog (Mus musculus (Mouse)).